A 490-amino-acid polypeptide reads, in one-letter code: Ribulose bisphosphate carboxylase large chain (490 aa).

2 residues coordinate substrate: Asn-127 and Thr-177. Lys-179 functions as the Proton acceptor in the catalytic mechanism. Lys-181 lines the substrate pocket. The Mg(2+) site is built by Lys-205, Asp-207, and Glu-208. Position 205 is an N6-carboxylysine (Lys-205). Catalysis depends on His-297, which acts as the Proton acceptor. Substrate is bound by residues Arg-298, His-330, and Ser-382.

Belongs to the RuBisCO large chain family. Type I subfamily. Heterohexadecamer of 8 large chains and 8 small chains. Requires Mg(2+) as cofactor.

The protein resides in the plastid. It localises to the chloroplast. The enzyme catalyses 2 (2R)-3-phosphoglycerate + 2 H(+) = D-ribulose 1,5-bisphosphate + CO2 + H2O. It carries out the reaction D-ribulose 1,5-bisphosphate + O2 = 2-phosphoglycolate + (2R)-3-phosphoglycerate + 2 H(+). In terms of biological role, ruBisCO catalyzes two reactions: the carboxylation of D-ribulose 1,5-bisphosphate, the primary event in carbon dioxide fixation, as well as the oxidative fragmentation of the pentose substrate in the photorespiration process. Both reactions occur simultaneously and in competition at the same active site. This is Ribulose bisphosphate carboxylase large chain from Trieres chinensis (Marine centric diatom).